Consider the following 4171-residue polypeptide: Cytoplasmic dynein 2 heavy chain 1 (4171 aa).

The tract at residues 1–1598 is stem; sequence MSSDSKDQRK…VLRQVSSEFE (1598 aa). 115 to 122 lines the ATP pocket; the sequence is GKELTEGN. Coiled coils occupy residues 164–203, 629–693, 829–861, 927–1048, and 1354–1383; these read ANDY…CDEL, KQLE…KEEE, DLEE…AERL, EIAE…KEKR, and SRQS…LEQK. 4 AAA regions span residues 1599 to 1823, 1883 to 2100, 2184 to 2432, and 2527 to 2767; these read YTYE…VLGG, EPLG…VRSH, VTKE…WVVS, and RFAF…PIKY. ATP-binding positions include 1637 to 1644, 1921 to 1928, 2226 to 2233, and 2565 to 2572; these read GPAGTGKT, GAAGSGKS, GTTGCGKQ, and GRPGFGRR. The segment at 2776 to 3064 is stalk; sequence QLLGYKRLTL…VDLDREQDTI (289 aa). 3 coiled-coil regions span residues 2790 to 2877, 2999 to 3059, and 3308 to 3336; these read ERLK…KEVQ, EKIA…DLDR, and ELEE…LLLQ. AAA regions lie at residues 3140–3367 and 3575–3784; these read ASLE…IITK and LMDF…FVEQ.

It belongs to the dynein heavy chain family. As to quaternary structure, the cytoplasmic dynein complex 2 is probably composed by a heavy chain che-3 homodimer and a number of light intermediate chains.

It localises to the cell projection. Its subcellular location is the cilium membrane. The protein localises to the cytoplasm. It is found in the cytoskeleton. In terms of biological role, functions as a motor for intraflagellar retrograde transport in chemosensory neurons. Functions in cilia biogenesis. This Caenorhabditis elegans protein is Cytoplasmic dynein 2 heavy chain 1.